The following is a 198-amino-acid chain: ATP-dependent Clp protease proteolytic subunit (198 aa).

Catalysis depends on S98, which acts as the Nucleophile. Residue H123 is part of the active site.

Belongs to the peptidase S14 family. In terms of assembly, fourteen ClpP subunits assemble into 2 heptameric rings which stack back to back to give a disk-like structure with a central cavity, resembling the structure of eukaryotic proteasomes.

The protein localises to the cytoplasm. The catalysed reaction is Hydrolysis of proteins to small peptides in the presence of ATP and magnesium. alpha-casein is the usual test substrate. In the absence of ATP, only oligopeptides shorter than five residues are hydrolyzed (such as succinyl-Leu-Tyr-|-NHMec, and Leu-Tyr-Leu-|-Tyr-Trp, in which cleavage of the -Tyr-|-Leu- and -Tyr-|-Trp bonds also occurs).. Its function is as follows. Cleaves peptides in various proteins in a process that requires ATP hydrolysis. Has a chymotrypsin-like activity. Plays a major role in the degradation of misfolded proteins. This chain is ATP-dependent Clp protease proteolytic subunit, found in Ehrlichia ruminantium (strain Gardel).